A 130-amino-acid chain; its full sequence is Small ribosomal subunit protein uS9 (130 aa).

This sequence belongs to the universal ribosomal protein uS9 family.

The polypeptide is Small ribosomal subunit protein uS9 (Thioalkalivibrio sulfidiphilus (strain HL-EbGR7)).